Consider the following 509-residue polypeptide: MAERAALEELVKLQGERVRGLKQQKASAELIEEEVAKLLKLKAQLGPDESKQKFVLKTPKGTRDYSPRQMAVREKVFDVIIRCFKRHGAEVIDTPVFELKETLMGKYGEDSKLIYDLKDQGGELLSLRYDLTVPFARYLAMNKLTNIKRYHIAKVYRRDNPAMTRGRYREFYQCDFDIAGNFDPMIPDAECLKIMCEILSSLQIGDFLVKVNDRRILDGMFAICGVSDSKFRTICSSVDKLDKVSWEEVKNEMVGEKGLAPEVADRIGDYVQQHGGVSLVEQLLQDPKLSQNKQALEGLGDLKLLFEYLTLFGIDDKISFDLSLARGLDYYTGVIYEAVLLQTPAQAGEEPLGVGSVAAGGRYDGLVGMFDPKGRKVPCVGLSIGVERIFSIVEQRLEALEEKIRTTETQVLVASAQKKLLEERLKLVSELWDAGIKAELLYKKNPKLLNQLQYCEEAGIPLVAIIGEQELKDGVIKLRSVTSREEVDVRREDLVEEIKRRTGQPLCIC.

At alanine 2 the chain carries N-acetylalanine. One can recognise a WHEP-TRS domain in the interval 3–59 (ERAALEELVKLQGERVRGLKQQKASAELIEEEVAKLLKLKAQLGPDESKQKFVLKTP). Phosphoserine is present on serine 66. L-histidine is bound by residues 130–132 (DLT), arginine 157, glutamine 173, aspartate 177, arginine 326, and 330–331 (YY). A Phosphoserine modification is found at serine 356.

It belongs to the class-II aminoacyl-tRNA synthetase family. Homodimer. In terms of tissue distribution, brain, heart, liver and kidney.

It localises to the cytoplasm. It catalyses the reaction tRNA(His) + L-histidine + ATP = L-histidyl-tRNA(His) + AMP + diphosphate + H(+). Its function is as follows. Catalyzes the ATP-dependent ligation of histidine to the 3'-end of its cognate tRNA, via the formation of an aminoacyl-adenylate intermediate (His-AMP). Plays a role in axon guidance. This is Histidine--tRNA ligase, cytoplasmic from Homo sapiens (Human).